Here is a 700-residue protein sequence, read N- to C-terminus: Elongation factor G 2 (700 aa).

The region spanning 8 to 290 is the tr-type G domain; the sequence is ERYRNIGISA…AVIDFLPSPV (283 aa). Residues 17–24, 88–92, and 142–145 contribute to the GTP site; these read AHIDAGKT, DTPGH, and NKMD.

It belongs to the TRAFAC class translation factor GTPase superfamily. Classic translation factor GTPase family. EF-G/EF-2 subfamily.

It localises to the cytoplasm. Catalyzes the GTP-dependent ribosomal translocation step during translation elongation. During this step, the ribosome changes from the pre-translocational (PRE) to the post-translocational (POST) state as the newly formed A-site-bound peptidyl-tRNA and P-site-bound deacylated tRNA move to the P and E sites, respectively. Catalyzes the coordinated movement of the two tRNA molecules, the mRNA and conformational changes in the ribosome. This Burkholderia orbicola (strain AU 1054) protein is Elongation factor G 2.